A 198-amino-acid chain; its full sequence is NADH-quinone oxidoreductase subunit B (198 aa).

Residues 1 to 20 (MGLNPTQVSTSGSPQVSQPA) are compositionally biased toward polar residues. The tract at residues 1 to 29 (MGLNPTQVSTSGSPQVSQPATGVLDPRTG) is disordered. [4Fe-4S] cluster contacts are provided by C77, C78, C142, and C172.

It belongs to the complex I 20 kDa subunit family. NDH-1 is composed of 14 different subunits. Subunits NuoB, C, D, E, F, and G constitute the peripheral sector of the complex. [4Fe-4S] cluster serves as cofactor.

The protein resides in the cell inner membrane. It catalyses the reaction a quinone + NADH + 5 H(+)(in) = a quinol + NAD(+) + 4 H(+)(out). In terms of biological role, NDH-1 shuttles electrons from NADH, via FMN and iron-sulfur (Fe-S) centers, to quinones in the respiratory chain. The immediate electron acceptor for the enzyme in this species is believed to be ubiquinone. Couples the redox reaction to proton translocation (for every two electrons transferred, four hydrogen ions are translocated across the cytoplasmic membrane), and thus conserves the redox energy in a proton gradient. This is NADH-quinone oxidoreductase subunit B from Afipia carboxidovorans (strain ATCC 49405 / DSM 1227 / KCTC 32145 / OM5) (Oligotropha carboxidovorans).